We begin with the raw amino-acid sequence, 297 residues long: Phosphatidylinositol N-acetylglucosaminyltransferase subunit C (297 aa).

Transmembrane regions (helical) follow at residues 51 to 71, 80 to 100, 117 to 137, 153 to 173, 174 to 194, 196 to 216, 227 to 244, and 250 to 270; these read VVFE…FVVI, LAPH…YVLF, WADL…SPVL, SVFM…AAIV, SSTL…SRLP, SLHA…WPML, SYVG…GGLL, and GAVL…FYLI.

This sequence belongs to the PIGC family. Component of the glycosylphosphatidylinositol-N-acetylglucosaminyltransferase (GPI-GnT) complex composed at least by PIGA, PIGC, PIGH, PIGP, PIGQ, PIGY and DPM2. Interacts with PIGQ. Interacts with the heterodimer PIGA:PIGH.

It localises to the endoplasmic reticulum membrane. Its pathway is glycolipid biosynthesis; glycosylphosphatidylinositol-anchor biosynthesis. In terms of biological role, part of the glycosylphosphatidylinositol-N-acetylglucosaminyltransferase (GPI-GnT) complex that catalyzes the transfer of N-acetylglucosamine from UDP-N-acetylglucosamine to phosphatidylinositol and participates in the first step of GPI biosynthesis. The chain is Phosphatidylinositol N-acetylglucosaminyltransferase subunit C from Homo sapiens (Human).